The primary structure comprises 361 residues: D-alanine--D-alanine ligase (361 aa).

Positions 134 to 344 (KILAQRAGVP…YTDLITKLID (211 aa)) constitute an ATP-grasp domain. Position 169–224 (169–224 (ASQLGSDLFVKPSNQGSSVGVSHVTNEKEYKVALAEAFKYDDKVLVEETVHGTEVE)) interacts with ATP. The Mg(2+) site is built by aspartate 297, glutamate 311, and asparagine 313.

Belongs to the D-alanine--D-alanine ligase family. Mg(2+) serves as cofactor. Mn(2+) is required as a cofactor.

The protein localises to the cytoplasm. It catalyses the reaction 2 D-alanine + ATP = D-alanyl-D-alanine + ADP + phosphate + H(+). The protein operates within cell wall biogenesis; peptidoglycan biosynthesis. Cell wall formation. This chain is D-alanine--D-alanine ligase, found in Lactobacillus gasseri (strain ATCC 33323 / DSM 20243 / BCRC 14619 / CIP 102991 / JCM 1131 / KCTC 3163 / NCIMB 11718 / NCTC 13722 / AM63).